Consider the following 490-residue polypeptide: Homoserine O-acetyltransferase (490 aa).

The 309-residue stretch at 47–355 folds into the AB hydrolase-1 domain; the sequence is NAILVCHALT…DYGHDAFLLE (309 aa). Serine 152 functions as the Nucleophile in the catalytic mechanism. A substrate-binding site is contributed by arginine 222. Residues aspartate 316 and histidine 349 contribute to the active site. Aspartate 350 serves as a coordination point for substrate. 2 consecutive CBS domains span residues 376–436 and 437–490; these read MKTD…LEDV and MTKD…ISSY.

This sequence belongs to the AB hydrolase superfamily. MetX family. In terms of assembly, homodimer.

Its subcellular location is the cytoplasm. The enzyme catalyses L-homoserine + acetyl-CoA = O-acetyl-L-homoserine + CoA. The protein operates within amino-acid biosynthesis; L-methionine biosynthesis via de novo pathway; O-acetyl-L-homoserine from L-homoserine: step 1/1. Transfers an acetyl group from acetyl-CoA to L-homoserine, forming acetyl-L-homoserine. In Methanobrevibacter ruminantium (strain ATCC 35063 / DSM 1093 / JCM 13430 / OCM 146 / M1) (Methanobacterium ruminantium), this protein is Homoserine O-acetyltransferase.